We begin with the raw amino-acid sequence, 1059 residues long: Protein OPAQUE10 (1059 aa).

7 consecutive repeat copies span residues 269–342 (SLLE…KESC), 343–416 (SLLE…KESC), 417–490 (SPLE…KESC), 491–564 (SPLE…KESC), 565–638 (FPLE…KESC), 639–712 (SPLE…KESC), and 713–786 (SPLE…KESC). The interval 269–786 (SLLEPEDSVN…SRPIHDKESC (518 aa)) is 7 X approximate repeats. Positions 511–534 (FNDAPNKESEGYGESGRGKHGEKS) are disordered. The span at 515-534 (PNKESEGYGESGRGKHGEKS) shows a compositional bias: basic and acidic residues. Disordered stretches follow at residues 732–756 (QYSDGPNEGNEGYGESGHYKHEEKS), 856–875 (ETLADHPKKEEAGLQKDTGT), and 889–998 (SVCS…SGKG). The segment covering 858 to 869 (LADHPKKEEAGL) has biased composition (basic and acidic residues). 2 stretches are compositionally biased toward polar residues: residues 907 to 924 (DFSSESHSRLTPTHNTGG) and 945 to 958 (ASDSTNPELNPEAS). Basic and acidic residues predominate over residues 984–994 (TRGRPEGDAPR). The helical transmembrane segment at 1003-1023 (VAGGITLVGAVFFMFHLSAAL) threads the bilayer.

As to quaternary structure, homodimer. Interacts (via N-terminus) with FL1 (via C-terminus), HIP, 19 kDa alpha-zein (AC P06677), 22 kDa alpha-zein (AC O48966), 16 kDa gamma-zein (AC P08031) and 50 kDa gamma-zein (AC C0P381). In terms of tissue distribution, expressed in kernels.

It is found in the endoplasmic reticulum membrane. Its function is as follows. Cereal endosperm protein required for the ring-shaped distribution of 22 kDa alpha- and 16 kDa gamma-zeins in protein bodies. The chain is Protein OPAQUE10 from Zea mays (Maize).